A 494-amino-acid chain; its full sequence is Guanosine-5'-triphosphate,3'-diphosphate pyrophosphatase (494 aa).

It belongs to the GppA/Ppx family. GppA subfamily.

It catalyses the reaction guanosine 3'-diphosphate 5'-triphosphate + H2O = guanosine 3',5'-bis(diphosphate) + phosphate + H(+). The protein operates within purine metabolism; ppGpp biosynthesis; ppGpp from GTP: step 2/2. Functionally, catalyzes the conversion of pppGpp to ppGpp. Guanosine pentaphosphate (pppGpp) is a cytoplasmic signaling molecule which together with ppGpp controls the 'stringent response', an adaptive process that allows bacteria to respond to amino acid starvation, resulting in the coordinated regulation of numerous cellular activities. This Escherichia coli O127:H6 (strain E2348/69 / EPEC) protein is Guanosine-5'-triphosphate,3'-diphosphate pyrophosphatase.